Reading from the N-terminus, the 757-residue chain is LPS-assembly protein LptD (757 aa).

Positions 1–20 (MLQRFITSLMLLPFPGSALA) are cleaved as a signal peptide.

The protein belongs to the LptD family. As to quaternary structure, component of the lipopolysaccharide transport and assembly complex. Interacts with LptE and LptA.

The protein resides in the cell outer membrane. In terms of biological role, together with LptE, is involved in the assembly of lipopolysaccharide (LPS) at the surface of the outer membrane. The polypeptide is LPS-assembly protein LptD (Idiomarina loihiensis (strain ATCC BAA-735 / DSM 15497 / L2-TR)).